Consider the following 313-residue polypeptide: Ribose-phosphate pyrophosphokinase (313 aa).

ATP is bound by residues 37–39 and 96–97; these read DGE and RQ. Mg(2+) is bound by residues histidine 131 and aspartate 170. Lysine 193 is a catalytic residue. D-ribose 5-phosphate contacts are provided by residues arginine 195, aspartate 219, and 223-227; that span reads DTAGT.

This sequence belongs to the ribose-phosphate pyrophosphokinase family. Class I subfamily. Homohexamer. Mg(2+) is required as a cofactor.

Its subcellular location is the cytoplasm. The enzyme catalyses D-ribose 5-phosphate + ATP = 5-phospho-alpha-D-ribose 1-diphosphate + AMP + H(+). It participates in metabolic intermediate biosynthesis; 5-phospho-alpha-D-ribose 1-diphosphate biosynthesis; 5-phospho-alpha-D-ribose 1-diphosphate from D-ribose 5-phosphate (route I): step 1/1. Functionally, involved in the biosynthesis of the central metabolite phospho-alpha-D-ribosyl-1-pyrophosphate (PRPP) via the transfer of pyrophosphoryl group from ATP to 1-hydroxyl of ribose-5-phosphate (Rib-5-P). This Pseudomonas aeruginosa (strain ATCC 15692 / DSM 22644 / CIP 104116 / JCM 14847 / LMG 12228 / 1C / PRS 101 / PAO1) protein is Ribose-phosphate pyrophosphokinase.